The chain runs to 72 residues: Conotoxin VnMKLT2-011 (72 aa).

Positions 1–23 (MMKLTCVLIIAVLFLTACQLTTA) are cleaved as a signal peptide. Positions 24-42 (ETRDEYRAVRSSDEVRNSR) are excised as a propeptide. 3 disulfides stabilise this stretch: Cys44-Cys57, Cys51-Cys62, and Cys56-Cys71.

Belongs to the conotoxin O1 superfamily. Expressed by the venom duct.

It is found in the secreted. The chain is Conotoxin VnMKLT2-011 from Conus ventricosus (Mediterranean cone).